A 98-amino-acid chain; its full sequence is Prostate and testis expressed protein 3 (98 aa).

Positions 1–20 (MNKHFLLLFSLFYFIVEATS) are cleaved as a signal peptide. The UPAR/Ly6 domain occupies 21 to 97 (LKCVTCHLRT…CCNSDFCNFR (77 aa)). 4 disulfide bridges follow: Cys-23/Cys-50, Cys-26/Cys-35, Cys-42/Cys-68, and Cys-72/Cys-88.

It belongs to the PATE family.

The protein localises to the secreted. In Mus musculus (Mouse), this protein is Prostate and testis expressed protein 3 (Pate3).